A 185-amino-acid chain; its full sequence is Protein PBP4 (185 aa).

2 stretches are compositionally biased toward low complexity: residues 1–24 (MTTT…LSAS) and 46–62 (AQAA…QQQQ). 2 disordered regions span residues 1–116 (MTTT…YNRE) and 147–168 (ETAS…SKNK). Polar residues-rich tracts occupy residues 73-83 (PANTKTKTIAS), 91-102 (KGSSTANGSSTN), and 147-166 (ETAS…SSSK).

As to quaternary structure, interacts with IGO1, LSM12 and PBP1.

The protein localises to the cytoplasm. The protein resides in the nucleus. The polypeptide is Protein PBP4 (PBP4) (Saccharomyces cerevisiae (strain ATCC 204508 / S288c) (Baker's yeast)).